A 500-amino-acid polypeptide reads, in one-letter code: Beta-glucosidase 30 (500 aa).

Residues 1–25 (MGIRMGRRLLFTLFLGALFCNGVYA) form the signal peptide. Gln46 contributes to the a beta-D-glucoside binding site. Residues Asn63 and Asn114 are each glycosylated (N-linked (GlcNAc...) asparagine). Residues His149 and 194 to 195 (NE) contribute to the a beta-D-glucoside site. Glu195 functions as the Proton donor in the catalytic mechanism. Cys214 and Cys222 are oxidised to a cystine. Tyr338 provides a ligand contact to a beta-D-glucoside. A glycan (N-linked (GlcNAc...) asparagine) is linked at Asn363. Residue Glu409 coordinates a beta-D-glucoside. The active-site Nucleophile is Glu409. N-linked (GlcNAc...) asparagine glycosylation is found at Asn416 and Asn417. Residues Trp456, 463–464 (EW), and Phe472 each bind a beta-D-glucoside.

It belongs to the glycosyl hydrolase 1 family.

It catalyses the reaction Hydrolysis of terminal, non-reducing beta-D-glucosyl residues with release of beta-D-glucose.. The chain is Beta-glucosidase 30 (BGLU30) from Oryza sativa subsp. japonica (Rice).